The primary structure comprises 236 residues: MGQKVNPIAFRTGVTRGWGSRWYASKQDFADLLVEDRKIREFITKHPKKSQYKSAGIDRIEIERTRDEVRVMLYVARPGLIIGKKGQEIEILQAELQNLVGRRINLKVEEVGRPELQAQLVAEDISQQLAKRSSFRRTMKRMLEQTMDAGAKGIKIQMAGRLGGAEMARREKQSAGSIPLSTLQAKIDYGFTEAMTPQGHIGIQVWINQGTYGDDNDGADAQTGQASKKPKRSYKR.

The 74-residue stretch at I39–G112 folds into the KH type-2 domain. The disordered stretch occupies residues Y212–R236.

Belongs to the universal ribosomal protein uS3 family. As to quaternary structure, part of the 30S ribosomal subunit. Forms a tight complex with proteins S10 and S14.

Its function is as follows. Binds the lower part of the 30S subunit head. Binds mRNA in the 70S ribosome, positioning it for translation. In Rhodopirellula baltica (strain DSM 10527 / NCIMB 13988 / SH1), this protein is Small ribosomal subunit protein uS3.